Reading from the N-terminus, the 387-residue chain is Galactokinase (387 aa).

36-39 (EHTD) contributes to the substrate binding site. Residues serine 70 and 125–131 (GAGLSSS) contribute to the ATP site. The Mg(2+) site is built by serine 131 and glutamate 163. The active-site Proton acceptor is aspartate 175. Tyrosine 227 contacts substrate.

Belongs to the GHMP kinase family. GalK subfamily.

The protein localises to the cytoplasm. It carries out the reaction alpha-D-galactose + ATP = alpha-D-galactose 1-phosphate + ADP + H(+). Its pathway is carbohydrate metabolism; galactose metabolism. Functionally, catalyzes the transfer of the gamma-phosphate of ATP to D-galactose to form alpha-D-galactose-1-phosphate (Gal-1-P). The sequence is that of Galactokinase from Streptomyces coelicolor (strain ATCC BAA-471 / A3(2) / M145).